Consider the following 156-residue polypeptide: Ribosomal RNA large subunit methyltransferase H (156 aa).

S-adenosyl-L-methionine-binding positions include L73, G104, and 123–128 (LSALTL).

The protein belongs to the RNA methyltransferase RlmH family. Homodimer.

The protein resides in the cytoplasm. It catalyses the reaction pseudouridine(1915) in 23S rRNA + S-adenosyl-L-methionine = N(3)-methylpseudouridine(1915) in 23S rRNA + S-adenosyl-L-homocysteine + H(+). Functionally, specifically methylates the pseudouridine at position 1915 (m3Psi1915) in 23S rRNA. The sequence is that of Ribosomal RNA large subunit methyltransferase H from Shewanella sp. (strain ANA-3).